Reading from the N-terminus, the 249-residue chain is Probable transcriptional regulatory protein ACIAD2052 (249 aa).

The protein belongs to the TACO1 family.

The protein localises to the cytoplasm. The protein is Probable transcriptional regulatory protein ACIAD2052 of Acinetobacter baylyi (strain ATCC 33305 / BD413 / ADP1).